The primary structure comprises 75 residues: Small ribosomal subunit protein bS18 (75 aa).

It belongs to the bacterial ribosomal protein bS18 family. As to quaternary structure, part of the 30S ribosomal subunit. Forms a tight heterodimer with protein bS6.

Binds as a heterodimer with protein bS6 to the central domain of the 16S rRNA, where it helps stabilize the platform of the 30S subunit. The protein is Small ribosomal subunit protein bS18 of Buchnera aphidicola subsp. Schizaphis graminum (strain Sg).